The chain runs to 148 residues: Receptor activity-modifying protein 1 (148 aa).

An N-terminal signal peptide occupies residues 1-26; the sequence is MVRVLRGLPWRGLWLLLAHQLFLVTA. Disulfide bonds link cysteine 27-cysteine 82, cysteine 40-cysteine 72, and cysteine 57-cysteine 104. The Extracellular portion of the chain corresponds to 27–118; that stretch reads CQDAHYGTLM…RALGDPPSTI (92 aa). A helical transmembrane segment spans residues 119-140; it reads LCPFVVLPITVTLLVTALVVWR. Residues 141-148 are Cytoplasmic-facing; that stretch reads SKRAESIV.

It belongs to the RAMP family. In terms of assembly, heterodimer of CALCRL and RAMP1; the interaction induces allosteric modulation of CALCRL function and CGRP1/CALCA and CGRP2/CALCB ligand specificity. Heterodimer of CALCR and RAMP1; interaction forms the AMYR1 receptor complex for amylin/IAPP and CGRP1/CALCA ligands.

The protein resides in the cell membrane. Its function is as follows. Accessory protein that interacts with and modulates the function of G-protein coupled receptors including calcitonin gene-related peptide type 1 receptor (CALCRL) and calcitonin receptor (CALCR). Required for the transport of CALCRL to the plasma membrane. Together with CALCRL, form the receptor complex for the calcitonin gene-related peptides CGRP1/CALCA and CGRP2/CALCB. Together with CALCR, form the AMYR1 receptor complex for amylin/IAPP and CGRP1/CALCA. This chain is Receptor activity-modifying protein 1 (RAMP1), found in Cavia porcellus (Guinea pig).